Here is a 315-residue protein sequence, read N- to C-terminus: Holliday junction branch migration complex subunit RuvB (315 aa).

A large ATPase domain (RuvB-L) region spans residues 1–168 (MAKKQEIRPK…FGLIGQISNY (168 aa)). Residues isoleucine 7, arginine 8, glycine 49, lysine 52, threonine 53, serine 54, 115–117 (EDF), arginine 158, tyrosine 168, and arginine 205 each bind ATP. Threonine 53 is a binding site for Mg(2+). The interval 169–239 (QVEDIEKIIK…LVNKTLKQLG (71 aa)) is small ATPAse domain (RuvB-S). Residues 242-315 (ENGLNESQVK…QKGISYLERI (74 aa)) are head domain (RuvB-H). DNA contacts are provided by lysine 297 and arginine 302.

It belongs to the RuvB family. In terms of assembly, homohexamer. Forms an RuvA(8)-RuvB(12)-Holliday junction (HJ) complex. HJ DNA is sandwiched between 2 RuvA tetramers; dsDNA enters through RuvA and exits via RuvB. An RuvB hexamer assembles on each DNA strand where it exits the tetramer. Each RuvB hexamer is contacted by two RuvA subunits (via domain III) on 2 adjacent RuvB subunits; this complex drives branch migration. In the full resolvosome a probable DNA-RuvA(4)-RuvB(12)-RuvC(2) complex forms which resolves the HJ.

It is found in the cytoplasm. The catalysed reaction is ATP + H2O = ADP + phosphate + H(+). Its function is as follows. The RuvA-RuvB-RuvC complex processes Holliday junction (HJ) DNA during genetic recombination and DNA repair, while the RuvA-RuvB complex plays an important role in the rescue of blocked DNA replication forks via replication fork reversal (RFR). RuvA specifically binds to HJ cruciform DNA, conferring on it an open structure. The RuvB hexamer acts as an ATP-dependent pump, pulling dsDNA into and through the RuvAB complex. RuvB forms 2 homohexamers on either side of HJ DNA bound by 1 or 2 RuvA tetramers; 4 subunits per hexamer contact DNA at a time. Coordinated motions by a converter formed by DNA-disengaged RuvB subunits stimulates ATP hydrolysis and nucleotide exchange. Immobilization of the converter enables RuvB to convert the ATP-contained energy into a lever motion, pulling 2 nucleotides of DNA out of the RuvA tetramer per ATP hydrolyzed, thus driving DNA branch migration. The RuvB motors rotate together with the DNA substrate, which together with the progressing nucleotide cycle form the mechanistic basis for DNA recombination by continuous HJ branch migration. Branch migration allows RuvC to scan DNA until it finds its consensus sequence, where it cleaves and resolves cruciform DNA. The protein is Holliday junction branch migration complex subunit RuvB of Mycoplasmopsis pulmonis (strain UAB CTIP) (Mycoplasma pulmonis).